The primary structure comprises 622 residues: Glucose 1,6-bisphosphate synthase (622 aa).

Positions 73 and 175 each coordinate alpha-D-glucose 1,6-bisphosphate. Ser175 acts as the Phosphoserine intermediate in catalysis. 3 residues coordinate Mg(2+): Ser175, Asp332, and Asp334. Ser175 carries the post-translational modification Phosphoserine. Residues Asp336, Arg337, Glu434, Ser436, and Lys448 each coordinate alpha-D-glucose 1,6-bisphosphate.

Belongs to the phosphohexose mutase family.

It is found in the cytoplasm. The protein localises to the cytosol. It catalyses the reaction (2R)-3-phospho-glyceroyl phosphate + alpha-D-glucose 1-phosphate = alpha-D-glucose 1,6-bisphosphate + (2R)-3-phosphoglycerate + H(+). The enzyme catalyses alpha-D-glucose 6-phosphate + (2R)-3-phospho-glyceroyl phosphate = alpha-D-glucose 1,6-bisphosphate + (2R)-3-phosphoglycerate + H(+). It carries out the reaction (2R)-3-phospho-glyceroyl phosphate + alpha-D-ribose 1-phosphate = alpha-D-ribose 1,5-bisphosphate + (2R)-3-phosphoglycerate + H(+). The catalysed reaction is 2-deoxy-alpha-D-ribose 1-phosphate + (2R)-3-phospho-glyceroyl phosphate = 2-deoxy-alpha-D-ribose 1,5-bisphosphate + (2R)-3-phosphoglycerate + H(+). It catalyses the reaction (2R)-3-phospho-glyceroyl phosphate + alpha-D-mannose 1-phosphate = alpha-D-mannose 1,6-bisphosphate + (2R)-3-phosphoglycerate + H(+). Functionally, glucose 1,6-bisphosphate synthase using 1,3-bisphosphoglycerate as a phosphate donor and a series of 1-phosphate sugars, including glucose 1-phosphate, mannose 1-phosphate, ribose 1-phosphate and deoxyribose 1-phosphate, as acceptors. In vitro, also exhibits very low phosphopentomutase and phosphoglucomutase activity which are most probably not physiologically relevant. The protein is Glucose 1,6-bisphosphate synthase of Homo sapiens (Human).